A 146-amino-acid chain; its full sequence is Hemoglobin subunit beta (146 aa).

V1 is modified (N-acetylvaline). Residues 2 to 146 (HLSSEEKGLI…VANALAHKYH (145 aa)) enclose the Globin domain. A Phosphothreonine modification is found at T12. At K59 the chain carries N6-acetyllysine. H63 lines the heme b pocket. K82 bears the N6-acetyllysine mark. H92 contacts heme b. C93 is subject to S-nitrosocysteine. K144 is subject to N6-acetyllysine.

It belongs to the globin family. Heterotetramer of two alpha chains and two beta chains. In terms of tissue distribution, red blood cells.

In terms of biological role, involved in oxygen transport from the lung to the various peripheral tissues. In Potorous tridactylus (Potoroo), this protein is Hemoglobin subunit beta (HBB).